A 121-amino-acid chain; its full sequence is Type II secretion system protein I (121 aa).

A propeptide spans 1–6 (leader sequence); the sequence is MRRQKG. Met7 is subject to N-methylmethionine. Residues 7–27 traverse the membrane as a helical segment; that stretch reads MTLVEVLVALSVFALAGIAVL.

This sequence belongs to the GSP I family. Type II secretion is composed of four main components: the outer membrane complex, the inner membrane complex, the cytoplasmic secretion ATPase and the periplasm-spanning pseudopilus. Interacts with core component OutG. In terms of processing, cleaved by prepilin peptidase. Methylated by prepilin peptidase at the amino group of the N-terminal methionine once the leader sequence is cleaved by prepilin peptidase.

The protein resides in the cell inner membrane. Its function is as follows. Component of the type II secretion system required for the energy-dependent secretion of extracellular factors such as proteases and toxins from the periplasm. Part of the pseudopilus tip complex that is critical for the recognition and binding of secretion substrates. This chain is Type II secretion system protein I (outI), found in Pectobacterium carotovorum subsp. carotovorum (Erwinia carotovora subsp. carotovora).